A 283-amino-acid polypeptide reads, in one-letter code: Aldo-keto reductase MSMEG_2407/MSMEI_2346 (283 aa).

The active-site Proton donor is Y58. Positions 196, 198, 200, 236, 238, 239, 240, 244, 247, 248, and 274 each coordinate NADPH.

Belongs to the aldo/keto reductase family. As to quaternary structure, monomer.

With respect to regulation, inhibited by the antituberculosis drug isoniazid (INH). Catalyzes the NADPH-dependent reduction of dicarbonyls. Exhibits narrow substrate specificity, with preferential activity against the dicarbonyl substrates phenylglyoxal and methylglyoxal. Exhibits weak activity with ethyl-2-methyl acetoacetate. Cannot use NADH. May play an important role in the detoxification of methylglyoxal. The chain is Aldo-keto reductase MSMEG_2407/MSMEI_2346 from Mycolicibacterium smegmatis (strain ATCC 700084 / mc(2)155) (Mycobacterium smegmatis).